Reading from the N-terminus, the 142-residue chain is MKGKYLLGILVILGALGYMVFGGLGRNLVYFLTPSEYLQDQARYQNRPVRLGGLVKPGTVQYDKDRLELRFVLTDGVAEVPVLHKGTPPGMFKEGQGVVVEGRFQEGVFQGTNLLVKHSETYQPPKEGWTPEEVRKLIEEAQ.

Topologically, residues 1-2 (MK) are cytoplasmic. The helical; Signal-anchor for type II membrane protein transmembrane segment at 3–23 (GKYLLGILVILGALGYMVFGG) threads the bilayer. At 24–142 (LGRNLVYFLT…EVRKLIEEAQ (119 aa)) the chain is on the periplasmic side. The heme site is built by histidine 118 and tyrosine 122.

It belongs to the CcmE/CycJ family.

The protein localises to the cell inner membrane. Functionally, heme chaperone required for the biogenesis of c-type cytochromes. Transiently binds heme delivered by CcmC and transfers the heme to apo-cytochromes in a process facilitated by CcmF and CcmH. The polypeptide is Cytochrome c-type biogenesis protein CcmE (Thermus thermophilus (strain ATCC BAA-163 / DSM 7039 / HB27)).